A 444-amino-acid chain; its full sequence is ATP-dependent RNA helicase sub2 (444 aa).

The Q motif signature appears at threonine 59 to glutamine 87. The Helicase ATP-binding domain occupies isoleucine 90 to isoleucine 265. Alanine 103–threonine 110 contacts ATP. Residues aspartate 212–aspartate 215 carry the DECD box motif. Positions glycine 277–alanine 438 constitute a Helicase C-terminal domain.

This sequence belongs to the DEAD box helicase family. DECD subfamily.

It is found in the nucleus. The enzyme catalyses ATP + H2O = ADP + phosphate + H(+). In terms of biological role, ATP-binding RNA helicase involved in transcription elongation and required for the export of mRNA out of the nucleus. SUB2 also plays a role in pre-mRNA splicing and spliceosome assembly. May be involved in rDNA and telomeric silencing, and maintenance of genome integrity. This is ATP-dependent RNA helicase sub2 (sub2) from Sclerotinia sclerotiorum (strain ATCC 18683 / 1980 / Ss-1) (White mold).